A 436-amino-acid polypeptide reads, in one-letter code: Serine protease hepsin (436 aa).

Positions 1 to 29 (MAKEDEEPGAHRGGSTCSRPQPGKGGRTA) are disordered. The Cytoplasmic portion of the chain corresponds to 1–38 (MAKEDEEPGAHRGGSTCSRPQPGKGGRTAACCSRPKVA). A helical; Signal-anchor for type II membrane protein transmembrane segment spans residues 39 to 59 (ALIVGTLLFLTGIGAASWAIV). Residues 60-436 (TILLQSDQEP…SEASGMVTQP (377 aa)) lie on the Extracellular side of the membrane. The 98-residue stretch at 73 to 170 (VQLSPGDSRL…RGRFLTATCQ (98 aa)) folds into the SRCR domain. 8 disulfide bridges follow: Cys-96/Cys-159, Cys-109/Cys-169, Cys-138/Cys-157, Cys-172/Cys-296, Cys-207/Cys-223, Cys-310/Cys-378, Cys-341/Cys-357, and Cys-368/Cys-400. N-linked (GlcNAc...) asparagine glycosylation occurs at Asn-131. Residues 182-424 (IVGGQDSSLG…FREWIFKAIK (243 aa)) enclose the Peptidase S1 domain. Residues His-222 and Asp-276 each act as charge relay system in the active site. The active-site Charge relay system is Ser-372.

It belongs to the peptidase S1 family. Detected in kidney, in thick ascending tubule epithelial cells (at protein level). Detected in kidney and liver.

The protein resides in the apical cell membrane. Its subcellular location is the cell membrane. It localises to the secreted. It carries out the reaction Cleavage after basic amino-acid residues, with Arg strongly preferred to Lys.. Functionally, serine protease that cleaves extracellular substrates, and contributes to the proteolytic processing of growth factors, such as HGF and MST1/HGFL. Plays a role in cell growth and maintenance of cell morphology. Plays a role in the proteolytic processing of ACE2. Mediates the proteolytic cleavage of urinary UMOD that is required for UMOD polymerization. The chain is Serine protease hepsin (Hpn) from Mus musculus (Mouse).